Consider the following 419-residue polypeptide: Zinc finger protein Pegasus (419 aa).

3 consecutive C2H2-type zinc fingers follow at residues leucine 79 to histidine 101, histidine 107 to histidine 129, and tyrosine 135 to histidine 158. 2 disordered regions span residues leucine 203–methionine 255 and serine 310–glutamine 360. The segment covering serine 208–glutamine 228 has biased composition (basic and acidic residues). 2 stretches are compositionally biased toward polar residues: residues serine 310–isoleucine 320 and glutamate 341–glutamine 360. C2H2-type zinc fingers lie at residues histidine 366–histidine 388 and phenylalanine 394–histidine 418.

It belongs to the Ikaros C2H2-type zinc-finger protein family. Probably self-associates.

Its subcellular location is the nucleus. Functionally, transcriptional repressor that binds the core 5'GNNTGTNG-3' DNA consensus sequence. The protein is Zinc finger protein Pegasus (ikzf5) of Danio rerio (Zebrafish).